The primary structure comprises 122 residues: Large ribosomal subunit protein bL12 (122 aa).

The protein belongs to the bacterial ribosomal protein bL12 family. As to quaternary structure, homodimer. Part of the ribosomal stalk of the 50S ribosomal subunit. Forms a multimeric L10(L12)X complex, where L10 forms an elongated spine to which 2 to 4 L12 dimers bind in a sequential fashion. Binds GTP-bound translation factors.

Forms part of the ribosomal stalk which helps the ribosome interact with GTP-bound translation factors. Is thus essential for accurate translation. This is Large ribosomal subunit protein bL12 from Mycoplasma pneumoniae (strain ATCC 29342 / M129 / Subtype 1) (Mycoplasmoides pneumoniae).